The sequence spans 461 residues: Phosphoglucosamine mutase (461 aa).

Ser113 acts as the Phosphoserine intermediate in catalysis. Residues Ser113, Asp251, Asp253, and Asp255 each coordinate Mg(2+). Ser113 bears the Phosphoserine mark.

It belongs to the phosphohexose mutase family. Mg(2+) is required as a cofactor. Post-translationally, activated by phosphorylation.

It carries out the reaction alpha-D-glucosamine 1-phosphate = D-glucosamine 6-phosphate. Catalyzes the conversion of glucosamine-6-phosphate to glucosamine-1-phosphate. The protein is Phosphoglucosamine mutase of Prochlorococcus marinus (strain SARG / CCMP1375 / SS120).